The chain runs to 306 residues: Putative type I specificity subunit S.MpnORF285P (306 aa).

The protein belongs to the type-I restriction system S methylase family. As to quaternary structure, the methyltransferase is composed of M and S polypeptides.

In terms of biological role, the specificity (S) subunit of a type I methyltransferase (MTase); this subunit dictates DNA sequence specificity. The single R subunit has multiple frameshifts and is probably not expressed. The sequence is that of Putative type I specificity subunit S.MpnORF285P from Mycoplasma pneumoniae (strain ATCC 29342 / M129 / Subtype 1) (Mycoplasmoides pneumoniae).